We begin with the raw amino-acid sequence, 263 residues long: Reductase pytE (263 aa).

Belongs to the avfA family.

It functions in the pathway secondary metabolite biosynthesis. Reductase; part of the gene cluster that mediates the biosynthesis of pyranterreones, a family of antioxidative compounds. The first step of pyranonigrins biosynthesis is performed by the hybrid PKS-NRPS synthetase pytA that condenses 4 malonyl-CoA units ato the acetyl starter unit by the modular PKS of pytA. The acyl chain is then connected to an L-serine through the amide bond by the modular NRPS of pytA. A tetramic acid is formed and released from the PKS-NRPS pytA to give pyranterreone 5 with the help of the thioesterase pytI. Pyranterreone 5 could be methylated by pytC to afford pyranterreone 6. Both pyranterreones 5 and 6 are subsequently oxidized by the FAD-linked oxidoreductase pytB and the cytochrome P450 monooxygenase pytD to form the fused gamma-pyrone core, resulting in pyranterreones 7 and 11, respectively. The hydroxy group at C-8 of pyranterreones 7 and 11 are dehydrated by the aspartyl protease pytH to form a delta-7 double bond to give pyranterreones 3 and 1, 2 accordingly. The exo-methylene of pyranterreone 3 could be reduced into a pendant methyl by reductase pytE to provide pyranterreone 4, also known as cordylactam. Pyranterreone 4 can be reconverted to pyranterreone 3 through pytB-catalyzed dehydrogenation or further oxidized to pyranterreones 9 and 10. The sequence is that of Reductase pytE from Aspergillus terreus.